Reading from the N-terminus, the 57-residue chain is Lantibiotic nisin-Z (57 aa).

Positions 1–23 (MSTKDFNLDLVSVSKKDSGASPR) are excised as a propeptide. 2,3-didehydrobutyrine is present on T25. The segment at residues 26–30 (SISLC) is a cross-link (lanthionine (Ser-Cys)). The residue at position 28 (S28) is a 2,3-didehydroalanine (Ser). 4 consecutive cross-links (beta-methyllanthionine (Thr-Cys)) follow at residues 31-34 (TPGC), 36-42 (TGALMGC), 46-49 (TATC), and 48-51 (TCNC). S56 is modified (2,3-didehydroalanine (Ser)).

Belongs to the type A lantibiotic family. In terms of processing, maturation of lantibiotics involves the enzymatic conversion of Thr, and Ser into dehydrated AA and the formation of thioether bonds with cysteine. This is followed by membrane translocation and cleavage of the modified precursor. The structure of the 2,3-didehydrobutyrine is not discussed in PubMed:15361862. It is probably the Z-isomer by similarity.

Functionally, lanthionine-containing peptide antibiotic (lantibiotic) active on Gram-positive bacteria. The bactericidal activity of lantibiotics is based on depolarization of energized bacterial cytoplasmic membranes, initiated by the formation of aqueous transmembrane pores. In Lactococcus lactis subsp. lactis (Streptococcus lactis), this protein is Lantibiotic nisin-Z (nisZ).